A 432-amino-acid polypeptide reads, in one-letter code: Enolase (432 aa).

Residue Gln-163 coordinates (2R)-2-phosphoglycerate. The active-site Proton donor is Glu-205. 3 residues coordinate Mg(2+): Asp-242, Glu-285, and Asp-312. Positions 337, 366, 367, and 388 each coordinate (2R)-2-phosphoglycerate. Lys-337 functions as the Proton acceptor in the catalytic mechanism.

It belongs to the enolase family. Requires Mg(2+) as cofactor.

Its subcellular location is the cytoplasm. It localises to the secreted. It is found in the cell surface. It carries out the reaction (2R)-2-phosphoglycerate = phosphoenolpyruvate + H2O. Its pathway is carbohydrate degradation; glycolysis; pyruvate from D-glyceraldehyde 3-phosphate: step 4/5. Functionally, catalyzes the reversible conversion of 2-phosphoglycerate (2-PG) into phosphoenolpyruvate (PEP). It is essential for the degradation of carbohydrates via glycolysis. This Desulfovibrio desulfuricans (strain ATCC 27774 / DSM 6949 / MB) protein is Enolase.